A 193-amino-acid polypeptide reads, in one-letter code: Riboflavin kinase (193 aa).

Residues 1–59 (MGISQQAASQHLRELEDEGLITRNAEGKGISVMVTDKGRHELLRVYNILHDSLHSRPDH) are H-T-H motif-like. Residues 60–193 (VEITGTLVSG…TIRIPLEQED (134 aa)) are riboflavin kinase. 69–74 (GMNEGA) contacts CDP. Residues T98 and N100 each coordinate Mg(2+). FMN is bound by residues T156 and E164. 169–172 (LDIR) contacts CDP.

The protein belongs to the archaeal riboflavin kinase family. Requires Mg(2+) as cofactor.

It carries out the reaction riboflavin + CTP = CDP + FMN + H(+). It participates in cofactor biosynthesis; FMN biosynthesis; FMN from riboflavin (CTP route): step 1/1. Its function is as follows. Catalyzes the CTP-dependent phosphorylation of riboflavin (vitamin B2) to form flavin mononucleotide (FMN). The polypeptide is Riboflavin kinase (ribK) (Cenarchaeum symbiosum (strain A)).